The following is a 1097-amino-acid chain: DNA-directed RNA polymerase subunit beta (1097 aa).

The interval 1073 to 1097 is disordered; the sequence is DVNPRRSTPSRPTYESLGVADYDED.

This sequence belongs to the RNA polymerase beta chain family. In cyanobacteria the RNAP catalytic core is composed of 2 alpha, 1 beta, 1 beta', 1 gamma and 1 omega subunit. When a sigma factor is associated with the core the holoenzyme is formed, which can initiate transcription.

The catalysed reaction is RNA(n) + a ribonucleoside 5'-triphosphate = RNA(n+1) + diphosphate. Functionally, DNA-dependent RNA polymerase catalyzes the transcription of DNA into RNA using the four ribonucleoside triphosphates as substrates. The chain is DNA-directed RNA polymerase subunit beta from Synechococcus sp. (strain CC9311).